The chain runs to 422 residues: Histone deacetylase B (422 aa).

Aspartate 102 provides a ligand contact to substrate. The Proton acceptor role is filled by histidine 144. Glycine 152 contributes to the substrate binding site. Residues aspartate 179, histidine 181, and aspartate 268 each contribute to the a divalent metal cation site. Tyrosine 307 is a binding site for substrate. The segment at 399-422 is disordered; it reads IDFDRDEDSKENMDKRKKKHNDFS. Over residues 413–422 the composition is skewed to basic residues; sequence KRKKKHNDFS.

This sequence belongs to the histone deacetylase family. HD type 1 subfamily.

Its subcellular location is the nucleus. The protein localises to the cytoplasm. The catalysed reaction is N(6)-acetyl-L-lysyl-[histone] + H2O = L-lysyl-[histone] + acetate. Its activity is inhibited by trichostatin A (TSA), a well known histone deacetylase inhibitor. Cytosolic activity is refractory to inhibition by TSA, while the nuclear activity is inhibited completely. In terms of biological role, responsible for the deacetylation of lysine residues on the N-terminal part of the core histones (H2A, H2B, H3 and H4). Histone deacetylation plays an important role in transcriptional regulation, cell cycle progression and developmental events. Histone deacetylases act via the formation of large multiprotein complexes. May play a role in the regulation of the timing of gene expression during the development and in the definition aspects of the phenotype that mediate social behavior in genetically heterogeneous groups. This chain is Histone deacetylase B (hdaB), found in Dictyostelium discoideum (Social amoeba).